A 300-amino-acid chain; its full sequence is Ribosomal protein L11 methyltransferase (300 aa).

Positions 152, 173, 195, and 234 each coordinate S-adenosyl-L-methionine.

Belongs to the methyltransferase superfamily. PrmA family.

The protein localises to the cytoplasm. The catalysed reaction is L-lysyl-[protein] + 3 S-adenosyl-L-methionine = N(6),N(6),N(6)-trimethyl-L-lysyl-[protein] + 3 S-adenosyl-L-homocysteine + 3 H(+). In terms of biological role, methylates ribosomal protein L11. The polypeptide is Ribosomal protein L11 methyltransferase (Burkholderia vietnamiensis (strain G4 / LMG 22486) (Burkholderia cepacia (strain R1808))).